We begin with the raw amino-acid sequence, 549 residues long: Eukaryotic translation initiation factor 3 subunit D-2 (549 aa).

The tract at residues 107 to 157 (ARVKGRSGRGPGMLGVAGSMAGGGTTSGSTKYGKGRESRRNQGRRFARNAP) is disordered. Positions 114 to 132 (GRGPGMLGVAGSMAGGGTT) are enriched in gly residues. The tract at residues 288-302 (QFDLLTVNETSLEPP) is RNA gate. Residues 527-549 (NSFDSDAEDEENSSEPFANSLDN) form a disordered region. The segment covering 529 to 539 (FDSDAEDEENS) has biased composition (acidic residues).

This sequence belongs to the eIF-3 subunit D family. In terms of assembly, component of the eukaryotic translation initiation factor 3 (eIF-3) complex. The eIF-3 complex interacts with pix.

The protein resides in the cytoplasm. In terms of biological role, mRNA cap-binding component of the eukaryotic translation initiation factor 3 (eIF-3) complex, which is involved in protein synthesis of a specialized repertoire of mRNAs and, together with other initiation factors, stimulates binding of mRNA and methionyl-tRNAi to the 40S ribosome. The eIF-3 complex specifically targets and initiates translation of a subset of mRNAs involved in cell proliferation. In the eIF-3 complex, eif3d specifically recognizes and binds the 7-methylguanosine cap of a subset of mRNAs. This Drosophila ananassae (Fruit fly) protein is Eukaryotic translation initiation factor 3 subunit D-2.